The chain runs to 384 residues: Galactokinase (384 aa).

Substrate is bound at residue 35–38 (EHTD). ATP-binding positions include Ser69 and 125-131 (GAGLSSS). Positions 131 and 163 each coordinate Mg(2+). The active-site Proton acceptor is the Asp175. Tyr224 is a binding site for substrate.

The protein belongs to the GHMP kinase family. GalK subfamily.

The protein resides in the cytoplasm. It catalyses the reaction alpha-D-galactose + ATP = alpha-D-galactose 1-phosphate + ADP + H(+). It participates in carbohydrate metabolism; galactose metabolism. Catalyzes the transfer of the gamma-phosphate of ATP to D-galactose to form alpha-D-galactose-1-phosphate (Gal-1-P). The chain is Galactokinase from Aliivibrio fischeri (strain ATCC 700601 / ES114) (Vibrio fischeri).